The primary structure comprises 337 residues: Major envelope glycoprotein (337 aa).

Asparagine 76, asparagine 114, asparagine 271, and asparagine 301 each carry an N-linked (GlcNAc...) asparagine; by host glycan.

The protein belongs to the baculoviridae gp64 family. Post-translationally, palmitoylated.

Its subcellular location is the virion membrane. The protein localises to the host cell membrane. Its function is as follows. Envelope phosphoglycoprotein which mediates the fusion of viral and host endosomal membranes leading to virus entry into the host cell. The protein is Major envelope glycoprotein (GP67) of Lepidoptera (butterflies and moths).